Reading from the N-terminus, the 296-residue chain is Diaminopimelate epimerase (296 aa).

Asparagine 11 and asparagine 78 together coordinate substrate. The active-site Proton donor is the cysteine 87. Substrate contacts are provided by residues glycine 88–asparagine 89, asparagine 167, asparagine 203, and glutamate 221–arginine 222. Cysteine 230 serves as the catalytic Proton acceptor. Residue glycine 231–threonine 232 participates in substrate binding.

Belongs to the diaminopimelate epimerase family. In terms of assembly, homodimer.

It is found in the cytoplasm. It catalyses the reaction (2S,6S)-2,6-diaminopimelate = meso-2,6-diaminopimelate. The protein operates within amino-acid biosynthesis; L-lysine biosynthesis via DAP pathway; DL-2,6-diaminopimelate from LL-2,6-diaminopimelate: step 1/1. In terms of biological role, catalyzes the stereoinversion of LL-2,6-diaminopimelate (L,L-DAP) to meso-diaminopimelate (meso-DAP), a precursor of L-lysine and an essential component of the bacterial peptidoglycan. In Mycobacterium leprae (strain Br4923), this protein is Diaminopimelate epimerase.